We begin with the raw amino-acid sequence, 355 residues long: Putative GPI-anchor transamidase (355 aa).

An N-terminal signal peptide occupies residues 1-24; it reads MFNIMLVKFVVIFALILASCRVEA. Catalysis depends on residues histidine 165 and cysteine 207.

The protein belongs to the peptidase C13 family.

The protein operates within glycolipid biosynthesis; glycosylphosphatidylinositol-anchor biosynthesis. Mediates GPI anchoring in the endoplasmic reticulum, by replacing a protein's C-terminal GPI attachment signal peptide with a pre-assembled GPI. During this transamidation reaction, the GPI transamidase forms a carbonyl intermediate with the substrate protein. In Drosophila melanogaster (Fruit fly), this protein is Putative GPI-anchor transamidase.